We begin with the raw amino-acid sequence, 176 residues long: Peptide methionine sulfoxide reductase MsrA (176 aa).

Residue Cys-10 is part of the active site.

The protein belongs to the MsrA Met sulfoxide reductase family.

It catalyses the reaction L-methionyl-[protein] + [thioredoxin]-disulfide + H2O = L-methionyl-(S)-S-oxide-[protein] + [thioredoxin]-dithiol. It carries out the reaction [thioredoxin]-disulfide + L-methionine + H2O = L-methionine (S)-S-oxide + [thioredoxin]-dithiol. Its function is as follows. Has an important function as a repair enzyme for proteins that have been inactivated by oxidation. Catalyzes the reversible oxidation-reduction of methionine sulfoxide in proteins to methionine. This chain is Peptide methionine sulfoxide reductase MsrA, found in Leptospira borgpetersenii serovar Hardjo-bovis (strain JB197).